We begin with the raw amino-acid sequence, 132 residues long: Large ribosomal subunit protein bL17 (132 aa).

This sequence belongs to the bacterial ribosomal protein bL17 family. As to quaternary structure, part of the 50S ribosomal subunit. Contacts protein L32.

In Cellvibrio japonicus (strain Ueda107) (Pseudomonas fluorescens subsp. cellulosa), this protein is Large ribosomal subunit protein bL17.